Here is a 211-residue protein sequence, read N- to C-terminus: MASCVVRDWQGKEAGKATLDLKVAKEASAVDLMHRAVLRQQAHMRQGTASTLTRSEVRGGGRKPYKQKGTGRARQGSVRTPLRPGGGIIFGPKPRSYNLAMNRKERRSALRTALMARIDDITVVKDFGTSLEAPKTREITEALGRLGIAADTKVLIVLTNPSEMVRRSVRNLDKVKLISANHLNVFDLLHANSLVVGEDALTTIQEVYGDD.

The tract at residues 42 to 87 (AHMRQGTASTLTRSEVRGGGRKPYKQKGTGRARQGSVRTPLRPGGG) is disordered. Over residues 60–71 (GGRKPYKQKGTG) the composition is skewed to basic residues.

The protein belongs to the universal ribosomal protein uL4 family. Part of the 50S ribosomal subunit.

In terms of biological role, one of the primary rRNA binding proteins, this protein initially binds near the 5'-end of the 23S rRNA. It is important during the early stages of 50S assembly. It makes multiple contacts with different domains of the 23S rRNA in the assembled 50S subunit and ribosome. Forms part of the polypeptide exit tunnel. This chain is Large ribosomal subunit protein uL4, found in Synechococcus sp. (strain CC9902).